A 281-amino-acid polypeptide reads, in one-letter code: MNAPQQSPEIGREILAAGYRTNLHDQGEGFPALLIHGSGPASPPGPTGAGSFRSSQTRRVIAPDMLGFGYSERPADGKYSQARWVEHAIGVLDALGIQQGDIVGNSFGGGLALALAIRHPERVRRLVLMGSVGVSFPITAGLETAWGYTPSLANMRRLLDLFAHDRTLVNDELAELRYQASIRPGFQESFAAMFPPPRQNGVDDLASNETDIRALPNETLVIHGREDRIIPLQASLTLAQWIPNAQLHVFGQCGHWTQIEHAERFARLVENFLAEADALHS.

The tract at residues 30–55 (FPALLIHGSGPASPPGPTGAGSFRSS) is disordered. An AB hydrolase-1 domain is found at 31-261 (PALLIHGSGP…QCGHWTQIEH (231 aa)). Active-site residues include Ser-106, Asp-227, and His-255.

This sequence belongs to the DmpD/TodF/XylF esterase family.

The enzyme catalyses (2Z,4E)-2-hydroxy-6-oxohexa-2,4-dienoate + H2O = 2-oxopent-4-enoate + formate + H(+). Its pathway is aromatic compound metabolism; benzoate degradation via hydroxylation. Its function is as follows. Catalyzes the conversion of 2-hydroxymuconate semialdehyde to 2-hydroxypent-2,4-dienoate. This Pseudomonas putida (Arthrobacter siderocapsulatus) protein is 2-hydroxymuconate semialdehyde hydrolase (xylF).